The primary structure comprises 173 residues: MTRILGIDPGSQRTGVGIIDVDATGRVSHVHHQPLVLLGADDFPQRMKLLVLGLADLCREYEPQEVAIERVFMARNPDSALKLGQARGAAISAVVLRDLPVHEYAASEIKLAVVGRGGAEKQQVQHMVGLMLNLKTKLQADAADALAVAITHAHVRATANRLGLSARQAWGRK.

Active-site residues include D8, E69, and D141. The Mg(2+) site is built by D8, E69, and D141.

The protein belongs to the RuvC family. In terms of assembly, homodimer which binds Holliday junction (HJ) DNA. The HJ becomes 2-fold symmetrical on binding to RuvC with unstacked arms; it has a different conformation from HJ DNA in complex with RuvA. In the full resolvosome a probable DNA-RuvA(4)-RuvB(12)-RuvC(2) complex forms which resolves the HJ. The cofactor is Mg(2+).

The protein resides in the cytoplasm. It carries out the reaction Endonucleolytic cleavage at a junction such as a reciprocal single-stranded crossover between two homologous DNA duplexes (Holliday junction).. The RuvA-RuvB-RuvC complex processes Holliday junction (HJ) DNA during genetic recombination and DNA repair. Endonuclease that resolves HJ intermediates. Cleaves cruciform DNA by making single-stranded nicks across the HJ at symmetrical positions within the homologous arms, yielding a 5'-phosphate and a 3'-hydroxyl group; requires a central core of homology in the junction. The consensus cleavage sequence is 5'-(A/T)TT(C/G)-3'. Cleavage occurs on the 3'-side of the TT dinucleotide at the point of strand exchange. HJ branch migration catalyzed by RuvA-RuvB allows RuvC to scan DNA until it finds its consensus sequence, where it cleaves and resolves the cruciform DNA. This is Crossover junction endodeoxyribonuclease RuvC from Stenotrophomonas maltophilia (strain R551-3).